Here is a 1119-residue protein sequence, read N- to C-terminus: GATOR2 complex protein MIOS (1119 aa).

A WD 1 repeat occupies 3–43 (QSSTRKRLIQWSPHNKSSFIVGSNDLRLYNFKFKDKNEKKN). A disordered region spans residues 41 to 60 (KKNENNINNSNQYNQNNQQQ). Residues 45–60 (NNINNSNQYNQNNQQQ) show a composition bias toward low complexity. 5 WD repeats span residues 127 to 169 (KTIS…ILTS), 183 to 227 (KHTR…STTL), 281 to 321 (TQSE…SSQS), 324 to 364 (AHQK…DPLI), and 368 to 409 (SNCK…EFSK). Residues 413 to 455 (LESTTLSTGGGGSGSNTSNNLNKRSTSNNNNSQDPINTISKPT) are disordered. Positions 427-444 (SNTSNNLNKRSTSNNNNS) are enriched in low complexity. The WD 7 repeat unit spans residues 459 to 499 (HSSDVVSSFSWHPTNECRMLTVSYSGVIDVVSLNENIPISW). Residues 601 to 669 (PSISTTTPGG…NNNNNNNNNN (69 aa)) form a disordered region. A C4-type zinc finger spans residues 973–1016 (AKCGFCQNSFAFESISASSIVGRNASSKPNFKAKVPFCPHCKQS). 13 residues coordinate Zn(2+): cysteine 975, cysteine 978, cysteine 1010, cysteine 1013, cysteine 1023, cysteine 1085, cysteine 1088, histidine 1090, histidine 1093, histidine 1096, cysteine 1107, cysteine 1112, and cysteine 1116.

The protein belongs to the WD repeat mio family. As to quaternary structure, probably part of the GATOR complex.

The protein localises to the lysosome membrane. As a component of the GATOR complex may function in the amino acid-sensing branch of the TORC1 signaling pathway. The chain is GATOR2 complex protein MIOS from Dictyostelium discoideum (Social amoeba).